A 367-amino-acid chain; its full sequence is UDP-N-acetylglucosamine--N-acetylmuramyl-(pentapeptide) pyrophosphoryl-undecaprenol N-acetylglucosamine transferase (367 aa).

UDP-N-acetyl-alpha-D-glucosamine is bound by residues Thr-15–Gly-17, Asn-126, Arg-169, Ser-197, and Gln-298.

It belongs to the glycosyltransferase 28 family. MurG subfamily.

Its subcellular location is the cell inner membrane. The enzyme catalyses di-trans,octa-cis-undecaprenyl diphospho-N-acetyl-alpha-D-muramoyl-L-alanyl-D-glutamyl-meso-2,6-diaminopimeloyl-D-alanyl-D-alanine + UDP-N-acetyl-alpha-D-glucosamine = di-trans,octa-cis-undecaprenyl diphospho-[N-acetyl-alpha-D-glucosaminyl-(1-&gt;4)]-N-acetyl-alpha-D-muramoyl-L-alanyl-D-glutamyl-meso-2,6-diaminopimeloyl-D-alanyl-D-alanine + UDP + H(+). It functions in the pathway cell wall biogenesis; peptidoglycan biosynthesis. Functionally, cell wall formation. Catalyzes the transfer of a GlcNAc subunit on undecaprenyl-pyrophosphoryl-MurNAc-pentapeptide (lipid intermediate I) to form undecaprenyl-pyrophosphoryl-MurNAc-(pentapeptide)GlcNAc (lipid intermediate II). In Bradyrhizobium sp. (strain ORS 278), this protein is UDP-N-acetylglucosamine--N-acetylmuramyl-(pentapeptide) pyrophosphoryl-undecaprenol N-acetylglucosamine transferase.